A 392-amino-acid polypeptide reads, in one-letter code: p21-activated protein kinase-interacting protein 1 (392 aa).

WD repeat units follow at residues 40-77 (AHTA…DHGA), 80-118 (HHNG…CLKS), 121-160 (AHKG…SAFI), 202-240 (TNER…CLSE), and 243-284 (AHEN…KVSP). A disordered region spans residues 309–392 (TKESPPAAAE…RKKKKIRMMQ (84 aa)). Basic and acidic residues predominate over residues 325 to 351 (EQSRRNKEESGHAVQEEEKQPKPDTEK). Over residues 355–368 (TGDSNKPTRGNSLV) the composition is skewed to polar residues. Basic residues predominate over residues 381 to 392 (KKRKKKKIRMMQ).

As to quaternary structure, interacts with PAK1.

The protein resides in the nucleus. It localises to the nucleolus. Functionally, negatively regulates the PAK1 kinase. PAK1 is a member of the PAK kinase family, which has been shown to play a positive role in the regulation of signaling pathways involving MAPK8 and RELA. PAK1 exists as an inactive homodimer, which is activated by binding of small GTPases such as CDC42 to an N-terminal regulatory domain. PAK1IP1 also binds to the N-terminus of PAK1, and inhibits the specific activation of PAK1 by CDC42. May be involved in ribosomal large subunit assembly. The protein is p21-activated protein kinase-interacting protein 1 (PAK1IP1) of Bos taurus (Bovine).